Here is a 445-residue protein sequence, read N- to C-terminus: MGITVLKNEGLDFHARISTPLSEIDDDIQKELLDLTKKVKIAGFRAGKVPVSIVKQKYGTSVRNDVIERRINHSVNHVIKKHNLSIIGRPKIEALQNEPDKALAFTVKIELLPKVTIPDLKKISLDRPKLEVNAKDVEEQLEKLAALTKSYTKESKAKIKDGDQVTIDAIGYIKDEAFEGGQLNDLKVVIGSNALIPSFEKQLIGSKTGSEVDVNVTFPENYHSKDLAGKEARFAVQIKAVHTAEPTVIDDEFAKKFQSNSLEELRTHFAKQIENESEEAINTIMKMNLFDQLEKLLDFDVPASLLEQEKNILKSETDKNNQDESLLKDKSPKEITEYYNKVALRRVRIGLLLAEYAKSKNLQLEPDDLRKVIMQRARNFPGQENMIFDFYKNNPSAIEGLKGPALEDKAVQYIFNNEIKLKEKKYTKEELEKYLEAEEQRITLI.

One can recognise a PPIase FKBP-type domain in the interval 162–247 (GDQVTIDAIG…IKAVHTAEPT (86 aa)).

Belongs to the FKBP-type PPIase family. Tig subfamily.

It localises to the cytoplasm. It carries out the reaction [protein]-peptidylproline (omega=180) = [protein]-peptidylproline (omega=0). Functionally, involved in protein export. Acts as a chaperone by maintaining the newly synthesized protein in an open conformation. Functions as a peptidyl-prolyl cis-trans isomerase. This chain is Trigger factor, found in Rickettsia akari (strain Hartford).